The following is a 465-amino-acid chain: UDP-N-acetylmuramoylalanine--D-glutamate ligase (465 aa).

Position 127-133 (G127–T133) interacts with ATP.

This sequence belongs to the MurCDEF family.

The protein localises to the cytoplasm. It carries out the reaction UDP-N-acetyl-alpha-D-muramoyl-L-alanine + D-glutamate + ATP = UDP-N-acetyl-alpha-D-muramoyl-L-alanyl-D-glutamate + ADP + phosphate + H(+). Its pathway is cell wall biogenesis; peptidoglycan biosynthesis. In terms of biological role, cell wall formation. Catalyzes the addition of glutamate to the nucleotide precursor UDP-N-acetylmuramoyl-L-alanine (UMA). The polypeptide is UDP-N-acetylmuramoylalanine--D-glutamate ligase (Cereibacter sphaeroides (strain ATCC 17029 / ATH 2.4.9) (Rhodobacter sphaeroides)).